The primary structure comprises 199 residues: Chaperone protein TorD (199 aa).

It belongs to the TorD/DmsD family. TorD subfamily.

The protein resides in the cytoplasm. Functionally, involved in the biogenesis of TorA. Acts on TorA before the insertion of the molybdenum cofactor and, as a result, probably favors a conformation of the apoenzyme that is competent for acquiring the cofactor. The sequence is that of Chaperone protein TorD from Escherichia coli (strain ATCC 8739 / DSM 1576 / NBRC 3972 / NCIMB 8545 / WDCM 00012 / Crooks).